The sequence spans 392 residues: Sulfate adenylyltransferase (392 aa).

The protein belongs to the sulfate adenylyltransferase family.

The catalysed reaction is sulfate + ATP + H(+) = adenosine 5'-phosphosulfate + diphosphate. It participates in sulfur metabolism; hydrogen sulfide biosynthesis; sulfite from sulfate: step 1/3. This Nostoc punctiforme (strain ATCC 29133 / PCC 73102) protein is Sulfate adenylyltransferase.